Consider the following 150-residue polypeptide: UPF0178 protein Sbal223_2514 (150 aa).

Belongs to the UPF0178 family.

This is UPF0178 protein Sbal223_2514 from Shewanella baltica (strain OS223).